Here is a 91-residue protein sequence, read N- to C-terminus: Sec-independent protein translocase protein TatA (91 aa).

A helical transmembrane segment spans residues 3–23 (FFGIGLPEMLVILAIALLVFG). The tract at residues 57–91 (DRTPATPAEATVEPPVLDSAPTEAVTVEKQTETQV) is disordered. Residues 59 to 72 (TPATPAEATVEPPV) show a composition bias toward low complexity.

The protein belongs to the TatA/E family. Forms a complex with TatC.

It localises to the cell inner membrane. Part of the twin-arginine translocation (Tat) system that transports large folded proteins containing a characteristic twin-arginine motif in their signal peptide across membranes. TatA could form the protein-conducting channel of the Tat system. The chain is Sec-independent protein translocase protein TatA from Synechococcus elongatus (strain ATCC 33912 / PCC 7942 / FACHB-805) (Anacystis nidulans R2).